The primary structure comprises 134 residues: ATP synthase epsilon chain, chloroplastic (134 aa).

It belongs to the ATPase epsilon chain family. F-type ATPases have 2 components, CF(1) - the catalytic core - and CF(0) - the membrane proton channel. CF(1) has five subunits: alpha(3), beta(3), gamma(1), delta(1), epsilon(1). CF(0) has three main subunits: a, b and c.

Its subcellular location is the plastid. The protein resides in the chloroplast thylakoid membrane. Its function is as follows. Produces ATP from ADP in the presence of a proton gradient across the membrane. This is ATP synthase epsilon chain, chloroplastic from Drimys granadensis.